The following is a 661-amino-acid chain: Fructose-1,6-bisphosphatase class 3 (661 aa).

The protein belongs to the FBPase class 3 family. Mn(2+) is required as a cofactor.

The enzyme catalyses beta-D-fructose 1,6-bisphosphate + H2O = beta-D-fructose 6-phosphate + phosphate. It functions in the pathway carbohydrate biosynthesis; gluconeogenesis. This is Fructose-1,6-bisphosphatase class 3 from Clostridioides difficile (strain 630) (Peptoclostridium difficile).